Consider the following 54-residue polypeptide: Large ribosomal subunit protein bL32c (54 aa).

A disordered region spans residues 1 to 20 (MAVPKKKMSKSRRNSRKSNW).

This sequence belongs to the bacterial ribosomal protein bL32 family.

Its subcellular location is the plastid. The protein resides in the chloroplast. The protein is Large ribosomal subunit protein bL32c (rpl32) of Euglena gracilis.